The following is a 107-amino-acid chain: Essential MCU regulator, mitochondrial (107 aa).

A mitochondrion-targeting transit peptide spans 1–47; sequence MASTAARRLAWVAVRPGALWSGPRGRRGGDVYTVPGSSGLSQVPSRS. The Mitochondrial matrix portion of the chain corresponds to 48 to 65; that stretch reads VIVTRSGAILPKPVKMSF. Residues 66-85 form a helical membrane-spanning segment; sequence GLLRVFSIVIPFLYVGTLIS. Positions 81–85 match the GXXXX[G/A/S] motif; it reads GTLIS. The Mitochondrial intermembrane segment spans residues 86–107; that stretch reads KNFAALLEEHDIFVPEDDDDDD.

Belongs to the SMDT1/EMRE family. In terms of assembly, component of the uniplex complex, composed of MCU, EMRE/SMDT1, MICU1 and MICU2 (or MICU3) in a 4:4:1:1 stoichiometry. The number of EMRE/SMDT1 molecules is hovewer variable, ranging from 1 to 4 copies per uniplex complex, leading to uniplex complexes with distinct gatekeeping profiles. Interacts (via its C-terminal poly-Asp tail) with MCUR1; the interaction is direct. Unprocessed form interacts (via transit peptide) with MAIP1. Undergoes proteolytic degradation in neurons: degraded by AFG3L2 and SPG7 before SMDT1/EMRE assembly with the uniporter complex, limiting the availability of SMDT1/EMRE for MCU assembly and promoting efficient assembly of gatekeeper subunits with MCU. Widely expressed.

Its subcellular location is the mitochondrion inner membrane. Its function is as follows. Essential regulatory subunit of the mitochondrial calcium uniporter complex (uniplex), a complex that mediates calcium uptake into mitochondria. Required to bridge the calcium-sensing proteins MICU1 with the calcium-conducting subunit MCU. Acts by mediating activation of MCU and retention of MICU1 to the MCU pore, in order to ensure tight regulation of the uniplex complex and appropriate responses to intracellular calcium signaling. This Mus musculus (Mouse) protein is Essential MCU regulator, mitochondrial.